The chain runs to 471 residues: MALRLAVSSALRPALNSQVRNASSAVSVKDVLASAPQAEVTTLKNGFRVVTEDNGSATATVGVWIETGSRFENEKNNGVAHFLERLIHKGTGKRASAALESELNAIGAKLNSFTERDQTAVFVQAGAQDVEKVVDILADVLRNSKLEASTIDTERVNLLKELEASDDYHQLVLFDMLHAAGFQGTPLALSVLGTSESIPNISAQQLKEWQEDHYRPVRMVLSAVGGGVSNVSSLADKYFGDLSNEYPRKVPQVDGTRFTGSEYRYRNDNVPHMYAAFAVEGVGYAHKDALALQIANQFIGQWDVTHATSRTAASRLVQKIGHDHGVHNLQHFNINYKDTGLFGIYFVADAHDLNDTSGIMKSVAHEWKHLASAATEEEVAMAKNQFRTNLYQNLETNTQKAGFNAKELLYTGNLRQLSELEAQIQKVDAGAVREAISRHVYDRDLAAVGVGRTEAFPNYALTRAGMSWWRM.

It belongs to the peptidase M16 family.

The protein localises to the mitochondrion matrix. This chain is Cytochrome b-c1 complex subunit 1, mitochondrial (ucr-1), found in Caenorhabditis elegans.